Here is a 388-residue protein sequence, read N- to C-terminus: Galactokinase (388 aa).

Residue 33 to 36 coordinates substrate; it reads EHTD. Residues serine 67 and 124–130 contribute to the ATP site; that span reads GSGLSSS. Residues serine 130 and glutamate 162 each contribute to the Mg(2+) site. Catalysis depends on aspartate 174, which acts as the Proton acceptor. Tyrosine 224 contacts substrate.

This sequence belongs to the GHMP kinase family. GalK subfamily.

Its subcellular location is the cytoplasm. The enzyme catalyses alpha-D-galactose + ATP = alpha-D-galactose 1-phosphate + ADP + H(+). It functions in the pathway carbohydrate metabolism; galactose metabolism. Its function is as follows. Catalyzes the transfer of the gamma-phosphate of ATP to D-galactose to form alpha-D-galactose-1-phosphate (Gal-1-P). This Streptococcus thermophilus protein is Galactokinase.